A 276-amino-acid polypeptide reads, in one-letter code: Alpha N-terminal protein methyltransferase 1 (276 aa).

Residues Gly96, Arg101, 118–120 (EPV), 149–150 (LQ), and Gln165 contribute to the S-adenosyl-L-methionine site.

This sequence belongs to the methyltransferase superfamily. NTM1 family.

It catalyses the reaction N-terminal L-alanyl-L-prolyl-L-lysyl-[protein] + 3 S-adenosyl-L-methionine = N-terminal N,N,N-trimethyl-L-alanyl-L-prolyl-L-lysyl-[protein] + 3 S-adenosyl-L-homocysteine + 3 H(+). The catalysed reaction is N-terminal L-seryl-L-prolyl-L-lysyl-[protein] + 3 S-adenosyl-L-methionine = N-terminal N,N,N-trimethyl-L-seryl-L-prolyl-L-lysyl-[protein] + 3 S-adenosyl-L-homocysteine + 3 H(+). The enzyme catalyses N-terminal L-prolyl-L-prolyl-L-lysyl-[protein] + 2 S-adenosyl-L-methionine = N-terminal N,N-dimethyl-L-prolyl-L-prolyl-L-lysyl-[protein] + 2 S-adenosyl-L-homocysteine + 2 H(+). Its function is as follows. Alpha-N-methyltransferase that methylates the N-terminus of target proteins containing the N-terminal motif [Ala/Pro/Ser]-Pro-Lys when the initiator Met is cleaved. Specifically catalyzes mono-, di- or tri-methylation of exposed alpha-amino group of Ala or Ser residue in the [Ala/Ser]-Pro-Lys motif and mono- or di-methylation of Pro in the Pro-Pro-Lys motif. The chain is Alpha N-terminal protein methyltransferase 1 from Arabidopsis thaliana (Mouse-ear cress).